A 108-amino-acid polypeptide reads, in one-letter code: Protein phosphatase 1 regulatory subunit 1C (108 aa).

The interval 25-108 (AEQIRKRRPT…ASEREEKWNH (84 aa)) is disordered. Basic and acidic residues predominate over residues 45-54 (NSPEIDEKRV). The segment covering 55–73 (TNTQESQNASPKQRKQSVY) has biased composition (polar residues). Basic and acidic residues predominate over residues 99–108 (ASEREEKWNH).

The protein belongs to the protein phosphatase inhibitor 1 family.

Its subcellular location is the cytoplasm. In terms of biological role, may increase cell susceptibility to TNF-induced apoptosis. This Mus musculus (Mouse) protein is Protein phosphatase 1 regulatory subunit 1C (Ppp1r1c).